The sequence spans 66 residues: Cold shock protein CspD (66 aa).

The 60-residue stretch at 4-63 (GKVKWFNNEKGFGFIEVEGGDDVFVHFTAIEGDGYKSLEEGQEVSFEIVEGNRGPQASNV) folds into the CSD domain.

The protein resides in the cytoplasm. This chain is Cold shock protein CspD (cspD), found in Bacillus subtilis (strain 168).